The chain runs to 181 residues: Transmembrane protein 154 (181 aa).

An N-terminal signal peptide occupies residues 1–22; the sequence is MTVPCAALVLALGLAFGQSSQG. The disordered stretch occupies residues 19-47; the sequence is SSQGNDEESEYSGQSITEEENSEDETTRS. Topologically, residues 23–74 are extracellular; it reads NDEESEYSGQSITEEENSEDETTRSALATVTTEALAENVNSTHTNDTSNQVE. The chain crosses the membrane as a helical span at residues 75-95; sequence FILMVAIPLAALLILLFMVLI. At 96-181 the chain is on the cytoplasmic side; the sequence is ATYFKSKRPK…PNPSPSDNES (86 aa). A disordered region spans residues 103–122; it reads RPKQEPSSQGSQSALQTHEL. Positions 107–118 are enriched in polar residues; the sequence is EPSSQGSQSALQ. Tyrosine 160 carries the phosphotyrosine modification. Residues 161-181 form a disordered region; sequence ECLPTLKEEKEPNPSPSDNES. A Phosphoserine modification is found at serine 177.

The protein resides in the membrane. The chain is Transmembrane protein 154 (Tmem154) from Mus musculus (Mouse).